Reading from the N-terminus, the 418-residue chain is Exodeoxyribonuclease 7 large subunit (418 aa).

It belongs to the XseA family. In terms of assembly, heterooligomer composed of large and small subunits.

The protein localises to the cytoplasm. The enzyme catalyses Exonucleolytic cleavage in either 5'- to 3'- or 3'- to 5'-direction to yield nucleoside 5'-phosphates.. Its function is as follows. Bidirectionally degrades single-stranded DNA into large acid-insoluble oligonucleotides, which are then degraded further into small acid-soluble oligonucleotides. In Acaryochloris marina (strain MBIC 11017), this protein is Exodeoxyribonuclease 7 large subunit.